A 187-amino-acid polypeptide reads, in one-letter code: Elongation factor P (187 aa).

Belongs to the elongation factor P family.

Its subcellular location is the cytoplasm. It functions in the pathway protein biosynthesis; polypeptide chain elongation. Involved in peptide bond synthesis. Stimulates efficient translation and peptide-bond synthesis on native or reconstituted 70S ribosomes in vitro. Probably functions indirectly by altering the affinity of the ribosome for aminoacyl-tRNA, thus increasing their reactivity as acceptors for peptidyl transferase. The polypeptide is Elongation factor P (Desulforapulum autotrophicum (strain ATCC 43914 / DSM 3382 / VKM B-1955 / HRM2) (Desulfobacterium autotrophicum)).